The following is a 439-amino-acid chain: Protein ABHD8 (439 aa).

Disordered stretches follow at residues 54–75 (HAGP…PGVK) and 122–148 (ELAE…RPKR). Pro residues predominate over residues 58 to 67 (APIPTPPPPP). Residues 138 to 148 (GRRRRPRRPKR) show a composition bias toward basic residues. The AB hydrolase-1 domain maps to 169–271 (VLFFIHGVGG…HKVIMINGGG (103 aa)). Active-site charge relay system residues include serine 244, aspartate 362, and histidine 390. Positions 415 to 439 (EAEPKLEPKPKPQLLQPEPAPGEEK) are disordered.

This sequence belongs to the AB hydrolase superfamily. Interacts with NLRP3 (via NACHT and LLR domains); this interaction is enhanced in the presence of NLRP3 inflammasome inducers, such as ATP, nigericin, silica, or alum. Interacts with ZDHHC12.

Its subcellular location is the cytoplasm. Its function is as follows. Negatively regulates NLRP3-driven inflammation. Promotes NLRP3 degradation through the chaperone-mediated autophagy (CMA) pathway, hence attenuating inflammasome activation and IL1B secretion. Acts by recruiting palmitoyltransferase ZDHHC12 to NLRP3, facilitating NLRP3 palmitoylation and subsequent degradation. The polypeptide is Protein ABHD8 (Mus musculus (Mouse)).